The sequence spans 221 residues: LGLRACDGNVDHAAVHIANRREELDQIKKEEREKKKRRLENINHLKGMGYSMRAARQALHQAAGNLEEALKILLHNPQLWWLNDSAPESNNRQQSPSQEKIDQLVYMGFDAVAAKAALRVFRDNVQLAAQTLVHNGGRLPPDLQLSAEDSSSTPSTSPSDSAGTSSASTDEDMETEAVNEILEDIPEHEEDYLDSTLEDEEIIIAEYLSYVENIKSAAKKN.

3 consecutive UBA domains span residues 1–19 (LGLRACDGNVDHAAVHIAN), 30–76 (EERE…LLHN), and 95–135 (SPSQ…LVHN). The tract at residues 136–193 (GGRLPPDLQLSAEDSSSTPSTSPSDSAGTSSASTDEDMETEAVNEILEDIPEHEEDYL) is disordered. Residues 146-168 (SAEDSSSTPSTSPSDSAGTSSAS) show a composition bias toward low complexity. Acidic residues predominate over residues 169-193 (TDEDMETEAVNEILEDIPEHEEDYL).

As to quaternary structure, directly interacts with NEDD8 and PSMD4/S5a, a member of the regulatory subunit of the 26S proteasome. Interacts with AIPL1.

It is found in the nucleus. In terms of biological role, specific down-regulator of the NEDD8 conjugation system. Recruits NEDD8 and its conjugates to the proteasome for degradation. The polypeptide is NEDD8 ultimate buster 1 (NUB1) (Bos taurus (Bovine)).